Here is a 369-residue protein sequence, read N- to C-terminus: DNA replication and repair protein RecF (369 aa).

30–37 (GDNAQGKT) serves as a coordination point for ATP.

Belongs to the RecF family.

It localises to the cytoplasm. Its function is as follows. The RecF protein is involved in DNA metabolism; it is required for DNA replication and normal SOS inducibility. RecF binds preferentially to single-stranded, linear DNA. It also seems to bind ATP. In Streptococcus equi subsp. equi (strain 4047), this protein is DNA replication and repair protein RecF.